The sequence spans 458 residues: tRNA modification GTPase MnmE (458 aa).

(6S)-5-formyl-5,6,7,8-tetrahydrofolate-binding residues include Arg22, Glu84, and Arg123. The region spanning 220–379 (GIATAIIGRP…LEKAIADLFF (160 aa)) is the TrmE-type G domain. Position 230 (Asn230) interacts with K(+). Residues 230 to 235 (NVGKSS), 249 to 255 (TDIAGTT), and 274 to 277 (DTAG) contribute to the GTP site. Ser234 serves as a coordination point for Mg(2+). Thr249, Ile251, and Thr254 together coordinate K(+). Thr255 contacts Mg(2+). Lys458 serves as a coordination point for (6S)-5-formyl-5,6,7,8-tetrahydrofolate.

The protein belongs to the TRAFAC class TrmE-Era-EngA-EngB-Septin-like GTPase superfamily. TrmE GTPase family. Homodimer. Heterotetramer of two MnmE and two MnmG subunits. K(+) serves as cofactor.

It is found in the cytoplasm. Functionally, exhibits a very high intrinsic GTPase hydrolysis rate. Involved in the addition of a carboxymethylaminomethyl (cmnm) group at the wobble position (U34) of certain tRNAs, forming tRNA-cmnm(5)s(2)U34. The chain is tRNA modification GTPase MnmE from Bacillus anthracis.